We begin with the raw amino-acid sequence, 262 residues long: Methylthioribulose-1-phosphate dehydratase (262 aa).

C115 is a substrate binding site. Residues H133 and H135 each coordinate Zn(2+). Catalysis depends on E158, which acts as the Proton donor/acceptor. Residue H223 participates in Zn(2+) binding.

It belongs to the aldolase class II family. MtnB subfamily. Zn(2+) is required as a cofactor.

The protein resides in the cytoplasm. The catalysed reaction is 5-(methylsulfanyl)-D-ribulose 1-phosphate = 5-methylsulfanyl-2,3-dioxopentyl phosphate + H2O. Its pathway is amino-acid biosynthesis; L-methionine biosynthesis via salvage pathway; L-methionine from S-methyl-5-thio-alpha-D-ribose 1-phosphate: step 2/6. In terms of biological role, catalyzes the dehydration of methylthioribulose-1-phosphate (MTRu-1-P) into 2,3-diketo-5-methylthiopentyl-1-phosphate (DK-MTP-1-P). This Meyerozyma guilliermondii (strain ATCC 6260 / CBS 566 / DSM 6381 / JCM 1539 / NBRC 10279 / NRRL Y-324) (Yeast) protein is Methylthioribulose-1-phosphate dehydratase.